The following is a 295-amino-acid chain: Glycine N-methyltransferase (295 aa).

2 residues coordinate (6S)-5-methyl-5,6,7,8-tetrahydrofolate: serine 4 and tyrosine 6. Position 10 is a phosphoserine (serine 10). Residues tyrosine 22, tryptophan 31, tyrosine 34, and arginine 41 each contribute to the S-adenosyl-L-methionine site. Tyrosine 34 carries the post-translational modification Phosphotyrosine. Lysine 46 carries the post-translational modification N6-succinyllysine. S-adenosyl-L-methionine contacts are provided by residues alanine 65, 86–88 (DAS), 117–118 (NW), 139–142 (LGNS), and arginine 178. An N6-succinyllysine mark is found at lysine 193, lysine 198, and lysine 203. Residue histidine 217 participates in (6S)-5-methyl-5,6,7,8-tetrahydrofolate binding. S-adenosyl-L-methionine is bound at residue tyrosine 223. Arginine 242 contributes to the (6S)-5-methyl-5,6,7,8-tetrahydrofolate binding site.

The protein belongs to the class I-like SAM-binding methyltransferase superfamily. Glycine N-methyltransferase family. As to quaternary structure, homotetramer. As to expression, abundant in liver.

It localises to the cytoplasm. It catalyses the reaction glycine + S-adenosyl-L-methionine = sarcosine + S-adenosyl-L-homocysteine + H(+). Its activity is regulated as follows. Inhibited by 5-methyltetrahydrofolate monoglutamate and by 5-methyltetrahydrofolate pentaglutamate, inhibition is much more effective by the pentaglutamate form than by the monoglutamate form. Two molecules of 5-methyltetrahydrofolate are bound per tetramer. The binding sites are localized between subunits. Inhibitor binding may preclude movements of the polypeptide chain that are necessary for enzyme activity. In terms of biological role, catalyzes the methylation of glycine by using S-adenosylmethionine (AdoMet) to form N-methylglycine (sarcosine) with the concomitant production of S-adenosylhomocysteine (AdoHcy), a reaction regulated by the binding of 5-methyltetrahydrofolate. Plays an important role in the regulation of methyl group metabolism by regulating the ratio between S-adenosyl-L-methionine and S-adenosyl-L-homocysteine. This chain is Glycine N-methyltransferase (GNMT), found in Oryctolagus cuniculus (Rabbit).